The sequence spans 645 residues: Protein hrpC2 (645 aa).

7 consecutive transmembrane segments (helical) span residues 18-34, 43-59, 108-124, 201-217, 243-259, 285-301, and 308-324; these read VAIA…MILP, LLGI…MVTM, LVVG…FLII, IAGL…GIVV, VSQI…GVMI, ARAL…FAFV, and LFLL…YTIW. The interval 334 to 354 is disordered; that stretch reads DQRKLPSASRKGAKGEAPHIR.

This sequence belongs to the FHIPEP (flagella/HR/invasion proteins export pore) family.

The protein resides in the cell inner membrane. Its function is as follows. Involved in the secretion of a proteinaceous elicitor of the hypersensitivity response in plants. This chain is Protein hrpC2 (hrpC2), found in Xanthomonas euvesicatoria.